Consider the following 80-residue polypeptide: Defensin-like protein 291 (80 aa).

The first 29 residues, 1-29, serve as a signal peptide directing secretion; the sequence is MAASKTTIFIVFVLCLSCTLLVNISGIQA. Cystine bridges form between cysteine 50-cysteine 70, cysteine 56-cysteine 75, and cysteine 62-cysteine 77.

It belongs to the DEFL family.

Its subcellular location is the secreted. This is Defensin-like protein 291 from Arabidopsis thaliana (Mouse-ear cress).